Here is a 300-residue protein sequence, read N- to C-terminus: NAD kinase (300 aa).

Catalysis depends on D75, which acts as the Proton acceptor. Residues 75–76 (DG), 149–150 (ND), R177, D179, 190–195 (TAYALS), A214, and Q248 contribute to the NAD(+) site.

Belongs to the NAD kinase family. A divalent metal cation is required as a cofactor.

It is found in the cytoplasm. It carries out the reaction NAD(+) + ATP = ADP + NADP(+) + H(+). Functionally, involved in the regulation of the intracellular balance of NAD and NADP, and is a key enzyme in the biosynthesis of NADP. Catalyzes specifically the phosphorylation on 2'-hydroxyl of the adenosine moiety of NAD to yield NADP. The sequence is that of NAD kinase from Burkholderia orbicola (strain MC0-3).